Here is a 98-residue protein sequence, read N- to C-terminus: Pore-forming peptide amoebapore A (98 aa).

An N-terminal signal peptide occupies residues 1–21; it reads MKAIVFVLIFAVAFAVTATHQ. The Saposin B-type domain maps to 22–98; that stretch reads GEILCNLCTG…NAICAKIHAC (77 aa). Intrachain disulfides connect Cys-26-Cys-98, Cys-29-Cys-92, and Cys-56-Cys-67.

As to quaternary structure, monomer (at pH below 4 and pH above 6). Homodimer (at pH 4-6). Hexamer; formed during insertion in the membrane.

Its subcellular location is the cytoplasmic granule. In terms of biological role, forms pores in the cell membrane of host cells. Has antibacterial activity against M.luteus, no activity against E.coli. Implicated in the cytolytic activity of the parasite. In Entamoeba histolytica (strain ATCC 30459 / HM-1:IMSS / ABRM), this protein is Pore-forming peptide amoebapore A.